A 937-amino-acid polypeptide reads, in one-letter code: MORC family CW-type zinc finger protein 4 (937 aa).

The segment at 420-472 (KVPDQTWVQCDECLKWRKLPGKIDPSMLPARWFCYYNSHPKYRRCSVPEEQEL) adopts a CW-type zinc-finger fold. Positions 429, 432, 453, and 464 each coordinate Zn(2+). The disordered stretch occupies residues 606 to 637 (PEGENSHDKSSSERSTPPYLFPEYPEASKNTG). A coiled-coil region spans residues 762 to 876 (KLKNQRELEE…LEMLQKAQVS (115 aa)).

As to expression, expressed at low levels in normal tissues, with highest expression levels in placenta and testis. Expression is significantly increased in subset of diffuse large B-cell lymphomas.

It is found in the nucleus. Histone methylation reader which binds to non-methylated (H3K4me0), monomethylated (H3K4me1), dimethylated (H3K4me2) and trimethylated (H3K4me3) 'Lys-4' on histone H3. The order of binding preference is H3K4me3 &gt; H3K4me2 &gt; H3K4me1 &gt; H3K4me0. The polypeptide is MORC family CW-type zinc finger protein 4 (MORC4) (Homo sapiens (Human)).